We begin with the raw amino-acid sequence, 146 residues long: Large ribosomal subunit protein bL21 (146 aa).

Residues 96–146 (KKKTRRKMGHRQELTRVMVKSISITNSTPKTSSKTEVKKKSTSPKASNPEN) form a disordered region.

This sequence belongs to the bacterial ribosomal protein bL21 family. Part of the 50S ribosomal subunit. Contacts protein L20.

Functionally, this protein binds to 23S rRNA in the presence of protein L20. This Prochlorococcus marinus subsp. pastoris (strain CCMP1986 / NIES-2087 / MED4) protein is Large ribosomal subunit protein bL21.